The following is a 1257-amino-acid chain: Liprin-alpha-2 (1257 aa).

Disordered regions lie at residues 1-29 (MMCE…DSDS), 231-265 (ASSE…DSTD), and 438-463 (EGQL…EHNK). The span at 16 to 26 (SQRGSQSSGSD) shows a compositional bias: low complexity. 3 coiled-coil regions span residues 29-154 (SHFE…SLRM), 185-541 (KALD…SLIE), and 643-695 (HSDA…GLNL). Position 236 is a phosphoserine (S236). T237 is modified (phosphothreonine). The span at 238–256 (ESEHLEGMEPGQKVHEKRL) shows a compositional bias: basic and acidic residues. A Phosphoserine modification is found at S239. Phosphoserine is present on residues S687 and S689. Composition is skewed to low complexity over residues 709 to 725 (TASS…HSTP) and 798 to 813 (SSLS…GLGS). Disordered regions lie at residues 709 to 738 (TASS…EMDR) and 790 to 834 (SSYH…KSSI). Residues S817 and S820 each carry the phosphoserine modification. SAM domains follow at residues 898–964 (WDGP…MVSL), 1020–1084 (NHEW…LKRL), and 1108–1177 (WSND…LLAL). Positions 1081–1107 (LKRLNYDRKELERRREASQHEIKDVLV) form a coiled coil.

The protein belongs to the liprin family. Liprin-alpha subfamily. In terms of assembly, forms homodimers and heterodimers with liprins-alpha and liprins-beta. Interacts with the second PTPase domain of PTPRD, PTPRF and PTPRS. Interacts with KIF1A; the interaction decreases in presence of calcium. As to expression, expressed only in brain.

It is found in the cytoplasm. It localises to the cell surface. The protein resides in the cell projection. The protein localises to the dendritic spine. Functionally, alters PTPRF cellular localization and induces PTPRF clustering. May regulate the disassembly of focal adhesions. May localize receptor-like tyrosine phosphatases type 2A at specific sites on the plasma membrane, possibly regulating their interaction with the extracellular environment and their association with substrates. In neuronal cells, is a scaffolding protein in the dendritic spines which acts as immobile postsynaptic post able to recruit KIF1A-driven dense core vesicles to dendritic spines. This Homo sapiens (Human) protein is Liprin-alpha-2 (PPFIA2).